A 38-amino-acid chain; its full sequence is MATPNPNKQPVELNRASLFIGLLLVLVLALLFSSYFFN.

Residues 17-37 form a helical membrane-spanning segment; it reads SLFIGLLLVLVLALLFSSYFF.

Belongs to the PsbL family. As to quaternary structure, PSII is composed of 1 copy each of membrane proteins PsbA, PsbB, PsbC, PsbD, PsbE, PsbF, PsbH, PsbI, PsbJ, PsbK, PsbL, PsbM, PsbT, PsbX, PsbY, PsbZ, Psb30/Ycf12, peripheral proteins PsbO, CyanoQ (PsbQ), PsbU, PsbV and a large number of cofactors. It forms dimeric complexes.

It is found in the cellular thylakoid membrane. One of the components of the core complex of photosystem II (PSII). PSII is a light-driven water:plastoquinone oxidoreductase that uses light energy to abstract electrons from H(2)O, generating O(2) and a proton gradient subsequently used for ATP formation. It consists of a core antenna complex that captures photons, and an electron transfer chain that converts photonic excitation into a charge separation. This subunit is found at the monomer-monomer interface and is required for correct PSII assembly and/or dimerization. In Acaryochloris marina (strain MBIC 11017), this protein is Photosystem II reaction center protein L.